An 87-amino-acid chain; its full sequence is Phosphocarrier protein HPr (87 aa).

An HPr domain is found at 1–87; that stretch reads MAEKTFTITA…EEVIKEGLGE (87 aa). Residue histidine 15 is the Pros-phosphohistidine intermediate of the active site. Serine 46 is modified (phosphoserine; by HPrK/P).

The protein belongs to the HPr family.

The protein resides in the cytoplasm. Its activity is regulated as follows. Phosphorylation on Ser-46 inhibits the phosphoryl transfer from enzyme I to HPr. Functionally, general (non sugar-specific) component of the phosphoenolpyruvate-dependent sugar phosphotransferase system (sugar PTS). This major carbohydrate active-transport system catalyzes the phosphorylation of incoming sugar substrates concomitantly with their translocation across the cell membrane. The phosphoryl group from phosphoenolpyruvate (PEP) is transferred to the phosphoryl carrier protein HPr by enzyme I. Phospho-HPr then transfers it to the PTS EIIA domain. In terms of biological role, P-Ser-HPr interacts with the catabolite control protein A (CcpA), forming a complex that binds to DNA at the catabolite response elements cre, operator sites preceding a large number of catabolite-regulated genes. Thus, P-Ser-HPr is a corepressor in carbon catabolite repression (CCR), a mechanism that allows bacteria to coordinate and optimize the utilization of available carbon sources. P-Ser-HPr also plays a role in inducer exclusion, in which it probably interacts with several non-PTS permeases and inhibits their transport activity. This chain is Phosphocarrier protein HPr (ptsH), found in Halalkalibacterium halodurans (strain ATCC BAA-125 / DSM 18197 / FERM 7344 / JCM 9153 / C-125) (Bacillus halodurans).